The chain runs to 88 residues: Small ribosomal subunit protein uS19 (88 aa).

The protein belongs to the universal ribosomal protein uS19 family.

In terms of biological role, protein S19 forms a complex with S13 that binds strongly to the 16S ribosomal RNA. This Chlamydia muridarum (strain MoPn / Nigg) protein is Small ribosomal subunit protein uS19 (rpsS).